Here is a 252-residue protein sequence, read N- to C-terminus: Adenosylcobinamide-GDP ribazoletransferase (252 aa).

Helical transmembrane passes span 4 to 24 (LFKG…PYVE), 38 to 58 (PIIG…INYL), 60 to 80 (ISIV…TGML), 113 to 133 (FSVI…HSFL), 141 to 161 (ILMF…ITII), 190 to 210 (LVCI…LLIV), and 232 to 252 (VAGF…CLFT).

It belongs to the CobS family. Mg(2+) serves as cofactor.

It localises to the cell membrane. It carries out the reaction alpha-ribazole + adenosylcob(III)inamide-GDP = adenosylcob(III)alamin + GMP + H(+). The enzyme catalyses alpha-ribazole 5'-phosphate + adenosylcob(III)inamide-GDP = adenosylcob(III)alamin 5'-phosphate + GMP + H(+). It functions in the pathway cofactor biosynthesis; adenosylcobalamin biosynthesis; adenosylcobalamin from cob(II)yrinate a,c-diamide: step 7/7. In terms of biological role, joins adenosylcobinamide-GDP and alpha-ribazole to generate adenosylcobalamin (Ado-cobalamin). Also synthesizes adenosylcobalamin 5'-phosphate from adenosylcobinamide-GDP and alpha-ribazole 5'-phosphate. This is Adenosylcobinamide-GDP ribazoletransferase from Clostridium botulinum (strain Alaska E43 / Type E3).